We begin with the raw amino-acid sequence, 1094 residues long: Probable serine/threonine-protein kinase kinX (1094 aa).

Positions 22 to 281 (LDFISEIGSG…QTLKQIKTTL (260 aa)) constitute a Protein kinase domain. ATP-binding positions include 28 to 36 (IGSGGFGKV) and Lys49. Asp146 (proton acceptor) is an active-site residue. Disordered regions lie at residues 301 to 884 (TTNG…SVED) and 946 to 1083 (IKVE…PNNK). The span at 330-344 (YDDDDDDDDDDDDND) shows a compositional bias: acidic residues. Polar residues predominate over residues 351–373 (SDNSNSNVTLESNSNYNSSTING). The span at 374–387 (QEQQEQQEQQQQQQ) shows a compositional bias: low complexity. The span at 393 to 408 (DEGEIEQDDDNIEVYD) shows a compositional bias: acidic residues. Positions 410–424 (DYQKKLEEHQKELLE) are enriched in basic and acidic residues. Acidic residues-rich tracts occupy residues 433–454 (STDE…EEEQ), 480–496 (DDED…EGDE), and 503–523 (DFDE…DEDE). 2 stretches are compositionally biased toward low complexity: residues 526 to 542 (IQYY…LQKQ) and 564 to 585 (RQLQ…QHQQ). The span at 587 to 602 (YDDDDDDDDEEEEEYD) shows a compositional bias: acidic residues. Residues 603-639 (DVIRHDTDSEEESKDKTPLPWDQHFEKQKESENKVEQ) are compositionally biased toward basic and acidic residues. The span at 650-661 (QETEQQQQQQQQ) shows a compositional bias: low complexity. Residues 670–801 (PTKVEDVKVE…EPVEEVKVEE (132 aa)) are compositionally biased toward basic and acidic residues. The 40 X 9 AA approximate repeats of V-K-V-E-E-P-V-E-E stretch occupies residues 676–978 (VKVETEEQTK…PVKVEVASPV (303 aa)). Residues 802 to 816 (PVEEVEAEESVQEPV) show a composition bias toward acidic residues. Basic and acidic residues-rich tracts occupy residues 817 to 884 (EEVK…SVED) and 946 to 971 (IKVE…EPVK). Composition is skewed to low complexity over residues 972-985 (VEVA…QPPQ) and 992-1011 (VVST…SNSP). A compositionally biased stretch (polar residues) spans 1016-1031 (VKQPQQQEIEVNSTPI). Low complexity predominate over residues 1032–1050 (KQQQQQQQTPTQQTQTPTK).

It belongs to the protein kinase superfamily. TKL Ser/Thr protein kinase family.

The enzyme catalyses L-seryl-[protein] + ATP = O-phospho-L-seryl-[protein] + ADP + H(+). It carries out the reaction L-threonyl-[protein] + ATP = O-phospho-L-threonyl-[protein] + ADP + H(+). This chain is Probable serine/threonine-protein kinase kinX (kinX), found in Dictyostelium discoideum (Social amoeba).